Reading from the N-terminus, the 247-residue chain is 3,4-dihydroxy-2-butanone 4-phosphate synthase (247 aa).

D-ribulose 5-phosphate-binding positions include 38-39 (RE), Asp43, 179-183 (RMGQT), and Glu203. Position 39 (Glu39) interacts with Mg(2+).

This sequence belongs to the DHBP synthase family. In terms of assembly, homodimer. Requires Mg(2+) as cofactor. It depends on Mn(2+) as a cofactor.

The enzyme catalyses D-ribulose 5-phosphate = (2S)-2-hydroxy-3-oxobutyl phosphate + formate + H(+). It participates in cofactor biosynthesis; riboflavin biosynthesis; 2-hydroxy-3-oxobutyl phosphate from D-ribulose 5-phosphate: step 1/1. Functionally, catalyzes the conversion of D-ribulose 5-phosphate to formate and 3,4-dihydroxy-2-butanone 4-phosphate. This chain is 3,4-dihydroxy-2-butanone 4-phosphate synthase, found in Methanosarcina acetivorans (strain ATCC 35395 / DSM 2834 / JCM 12185 / C2A).